The following is a 714-amino-acid chain: Polyribonucleotide nucleotidyltransferase (714 aa).

Mg(2+)-binding residues include D496 and D502. One can recognise a KH domain in the interval 562 to 621 (PRLLTIKIDPDLIGMVIGPGGKTIKGITEQTRAKVDIADDGTVTIASSESENAEKAKRLI). The S1 motif domain maps to 631–699 (GDVYFGKVTR…NKGRINLTRL (69 aa)).

It belongs to the polyribonucleotide nucleotidyltransferase family. The cofactor is Mg(2+).

The protein resides in the cytoplasm. It carries out the reaction RNA(n+1) + phosphate = RNA(n) + a ribonucleoside 5'-diphosphate. In terms of biological role, involved in mRNA degradation. Catalyzes the phosphorolysis of single-stranded polyribonucleotides processively in the 3'- to 5'-direction. In Picosynechococcus sp. (strain ATCC 27264 / PCC 7002 / PR-6) (Agmenellum quadruplicatum), this protein is Polyribonucleotide nucleotidyltransferase.